Reading from the N-terminus, the 187-residue chain is Cytochrome c oxidase assembly protein CtaG (187 aa).

Over 1–9 (MSKKSNKNL) the chain is Cytoplasmic. Residues 10–30 (AFSLLGLIISMVLLSFASVPI) traverse the membrane as a helical; Signal-anchor for type II membrane protein segment. Topologically, residues 31–187 (YNLFCKVTGY…IASLRGNTKY (157 aa)) are periplasmic.

The protein belongs to the COX11/CtaG family.

The protein localises to the cell inner membrane. In terms of biological role, exerts its effect at some terminal stage of cytochrome c oxidase synthesis, probably by being involved in the insertion of the copper B into subunit I. This Rickettsia felis (strain ATCC VR-1525 / URRWXCal2) (Rickettsia azadi) protein is Cytochrome c oxidase assembly protein CtaG.